Here is a 326-residue protein sequence, read N- to C-terminus: Ras association domain-containing protein 2 (326 aa).

In terms of domain architecture, Ras-associating spans 176–264; sequence YNHKTSVFTP…SKVFLMEKDQ (89 aa). Residues 272 to 319 enclose the SARAH domain; that stretch reads VAQYIKFEMPVLKSFIQKLQEEEDREVEKLMRKYTVLRLMIRQRLEEI.

Interacts directly with activated KRAS in a GTP-dependent manner. Interacts (via SARAH domain) with STK3/MST2 and STK4/MST1. In terms of processing, phosphorylated by STK3/MST2 and STK4/MST1.

It is found in the nucleus. Its subcellular location is the cytoplasm. The protein resides in the chromosome. The protein localises to the centromere. It localises to the kinetochore. Potential tumor suppressor. Acts as a KRAS-specific effector protein. May promote apoptosis and cell cycle arrest. Stabilizes STK3/MST2 by protecting it from proteasomal degradation. This Mus musculus (Mouse) protein is Ras association domain-containing protein 2 (Rassf2).